Consider the following 350-residue polypeptide: UDP-N-acetylenolpyruvoylglucosamine reductase (350 aa).

Residues 24–195 (HVEATARWLL…VAVEFNLPLL (172 aa)) enclose the FAD-binding PCMH-type domain. Arginine 172 is a catalytic residue. Serine 245 (proton donor) is an active-site residue. The active site involves glutamate 342.

The protein belongs to the MurB family. FAD is required as a cofactor.

The protein resides in the cytoplasm. The enzyme catalyses UDP-N-acetyl-alpha-D-muramate + NADP(+) = UDP-N-acetyl-3-O-(1-carboxyvinyl)-alpha-D-glucosamine + NADPH + H(+). It participates in cell wall biogenesis; peptidoglycan biosynthesis. Its function is as follows. Cell wall formation. This Xanthomonas oryzae pv. oryzae (strain MAFF 311018) protein is UDP-N-acetylenolpyruvoylglucosamine reductase.